The following is a 402-amino-acid chain: Type II NADH:quinone oxidoreductase (402 aa).

Residues 12-16, 39-40, and Val-83 each bind FAD; these read GAGYA and NK. Glu-172 is an active-site residue. Residues Asp-302, 319-320, and Lys-379 contribute to the FAD site; that span reads AQ.

It belongs to the NADH dehydrogenase family. It depends on FAD as a cofactor.

Its subcellular location is the cell membrane. It catalyses the reaction a quinone + NADH + H(+) = a quinol + NAD(+). Functionally, alternative, nonproton pumping NADH:quinone oxidoreductase that delivers electrons to the respiratory chain by oxidation of NADH and reduction of quinones, and contributes to the regeneration of NAD(+). The polypeptide is Type II NADH:quinone oxidoreductase (Staphylococcus haemolyticus (strain JCSC1435)).